A 376-amino-acid polypeptide reads, in one-letter code: Chaperone protein DnaJ (376 aa).

Residues 5-70 (DYYEILGVSK…QKRAAYDQYG (66 aa)) enclose the J domain. The segment at 131 to 209 (GVTKEIRIPT…CHGHGRVERS (79 aa)) adopts a CR-type zinc-finger fold. 8 residues coordinate Zn(2+): Cys144, Cys147, Cys161, Cys164, Cys183, Cys186, Cys197, and Cys200. 4 CXXCXGXG motif repeats span residues 144–151 (CDVCHGSG), 161–168 (CPTCHGSG), 183–190 (CPHCQGRG), and 197–204 (CNKCHGHG).

The protein belongs to the DnaJ family. Homodimer. Zn(2+) serves as cofactor.

The protein localises to the cytoplasm. Participates actively in the response to hyperosmotic and heat shock by preventing the aggregation of stress-denatured proteins and by disaggregating proteins, also in an autonomous, DnaK-independent fashion. Unfolded proteins bind initially to DnaJ; upon interaction with the DnaJ-bound protein, DnaK hydrolyzes its bound ATP, resulting in the formation of a stable complex. GrpE releases ADP from DnaK; ATP binding to DnaK triggers the release of the substrate protein, thus completing the reaction cycle. Several rounds of ATP-dependent interactions between DnaJ, DnaK and GrpE are required for fully efficient folding. Also involved, together with DnaK and GrpE, in the DNA replication of plasmids through activation of initiation proteins. The chain is Chaperone protein DnaJ from Shigella dysenteriae serotype 1 (strain Sd197).